The following is a 298-amino-acid chain: Pantothenate synthetase (298 aa).

30–37 (MGNLHEGH) lines the ATP pocket. H37 functions as the Proton donor in the catalytic mechanism. (R)-pantoate is bound at residue Q61. Q61 serves as a coordination point for beta-alanine. Residue 149 to 152 (GEKD) participates in ATP binding. Q155 is a binding site for (R)-pantoate. ATP is bound by residues V178 and 186–189 (MSSR).

This sequence belongs to the pantothenate synthetase family. In terms of assembly, homodimer.

It is found in the cytoplasm. The catalysed reaction is (R)-pantoate + beta-alanine + ATP = (R)-pantothenate + AMP + diphosphate + H(+). It functions in the pathway cofactor biosynthesis; (R)-pantothenate biosynthesis; (R)-pantothenate from (R)-pantoate and beta-alanine: step 1/1. Catalyzes the condensation of pantoate with beta-alanine in an ATP-dependent reaction via a pantoyl-adenylate intermediate. This Aliivibrio salmonicida (strain LFI1238) (Vibrio salmonicida (strain LFI1238)) protein is Pantothenate synthetase.